The sequence spans 509 residues: Maturase K (509 aa).

Belongs to the intron maturase 2 family. MatK subfamily.

It is found in the plastid. The protein resides in the chloroplast. In terms of biological role, usually encoded in the trnK tRNA gene intron. Probably assists in splicing its own and other chloroplast group II introns. The sequence is that of Maturase K from Nicotiana glauca (Glaucous tobacco).